Here is a 976-residue protein sequence, read N- to C-terminus: Leucine--tRNA ligase (976 aa).

Residues 1–23 are compositionally biased toward low complexity; sequence MTESPTTTPGSTSGAPSGVPSGV. The tract at residues 1 to 34 is disordered; the sequence is MTESPTTTPGSTSGAPSGVPSGVNDAESDAPRHR. A 'HIGH' region motif is present at residues 86–97; sequence PYPSGEGLHVGH. Residues 745 to 749 carry the 'KMSKS' region motif; the sequence is KIGKS. K748 is a binding site for ATP.

It belongs to the class-I aminoacyl-tRNA synthetase family.

It localises to the cytoplasm. The catalysed reaction is tRNA(Leu) + L-leucine + ATP = L-leucyl-tRNA(Leu) + AMP + diphosphate. This Mycobacterium marinum (strain ATCC BAA-535 / M) protein is Leucine--tRNA ligase.